Reading from the N-terminus, the 115-residue chain is NADH-ubiquinone oxidoreductase chain 3 (115 aa).

The next 3 membrane-spanning stretches (helical) occupy residues 4 to 24 (LLVL…AFWL), 55 to 75 (FFLV…LLPL), and 87 to 107 (MTLT…YEWL).

It belongs to the complex I subunit 3 family. Core subunit of respiratory chain NADH dehydrogenase (Complex I) which is composed of 45 different subunits. Interacts with TMEM186. Interacts with TMEM242.

It localises to the mitochondrion inner membrane. It catalyses the reaction a ubiquinone + NADH + 5 H(+)(in) = a ubiquinol + NAD(+) + 4 H(+)(out). Its function is as follows. Core subunit of the mitochondrial membrane respiratory chain NADH dehydrogenase (Complex I) which catalyzes electron transfer from NADH through the respiratory chain, using ubiquinone as an electron acceptor. Essential for the catalytic activity of complex I. This chain is NADH-ubiquinone oxidoreductase chain 3, found in Peromyscus eremicus (Cactus mouse).